Consider the following 598-residue polypeptide: Aspartate--tRNA(Asp/Asn) ligase (598 aa).

E174 provides a ligand contact to L-aspartate. The tract at residues 198–201 (QQLK) is aspartate. R220 is an L-aspartate binding site. Residues 220 to 222 (RDE) and Q229 each bind ATP. Residue H458 participates in L-aspartate binding. E492 contributes to the ATP binding site. R499 provides a ligand contact to L-aspartate. 544 to 547 (GIDR) is a binding site for ATP.

Belongs to the class-II aminoacyl-tRNA synthetase family. Type 1 subfamily. Homodimer.

Its subcellular location is the cytoplasm. It carries out the reaction tRNA(Asx) + L-aspartate + ATP = L-aspartyl-tRNA(Asx) + AMP + diphosphate. In terms of biological role, aspartyl-tRNA synthetase with relaxed tRNA specificity since it is able to aspartylate not only its cognate tRNA(Asp) but also tRNA(Asn). Reaction proceeds in two steps: L-aspartate is first activated by ATP to form Asp-AMP and then transferred to the acceptor end of tRNA(Asp/Asn). The chain is Aspartate--tRNA(Asp/Asn) ligase from Dehalococcoides mccartyi (strain ATCC BAA-2266 / KCTC 15142 / 195) (Dehalococcoides ethenogenes (strain 195)).